We begin with the raw amino-acid sequence, 93 residues long: Parbolysin P3 (93 aa).

Cystine bridges form between cysteine 16–cysteine 37, cysteine 22–cysteine 33, and cysteine 47–cysteine 60.

This sequence belongs to the worm cytolysin family. As to expression, localized within the skin and proboscis and are most readily isolated from body mucus secretions.

It localises to the secreted. Its function is as follows. Cytolysin that shows hemolytic activity (on bovine erythrocytes, HC(50)=5.75 mg/ml). This hemolytic activity is completely inhibited by small unilamelar vesicles composed of PC/PG, PC/PI and PC/PS in 1:1 molar ratios (with at least 100 mg/ml concentration). The sequence is that of Parbolysin P3 from Parborlasia corrugatus (Antarctic nemertean worm).